Reading from the N-terminus, the 323-residue chain is Vertebrate ancient opsin (323 aa).

Residues 1-38 (MDTLRIAVNGVSYNEASEIYKPHADPFTGPITNLAPWN) lie on the Extracellular side of the membrane. Residues 39–63 (FAVLATLMFVITSLSLFENFTVMLA) form a helical membrane-spanning segment. Topologically, residues 64–75 (TYKFKQLRQPLN) are cytoplasmic. Residues 76–100 (YIIVNLSLADFLVSLTGGTISFLTN) traverse the membrane as a helical segment. The Extracellular portion of the chain corresponds to 101 to 115 (ARGYFFLGNWACVLE). A disulfide bond links Cys-112 and Cys-189. Residues 116 to 135 (GFAVTYFGIVAMWSLAVLSF) traverse the membrane as a helical segment. Residues 136–154 (ERYFVICRPLGNVRLRGKH) lie on the Cytoplasmic side of the membrane. Residues 155–178 (AALGLLFVWTFSFIWTIPPVFGWC) form a helical membrane-spanning segment. Residues 179–202 (SYTVSKIGTTCEPNWYSNNIWNHT) are Extracellular-facing. Asn-200 carries an N-linked (GlcNAc...) asparagine glycan. The helical transmembrane segment at 203–230 (YIITFFVTCFIMPLGMIIYCYGKLLQKL) threads the bilayer. Over 231–250 (RKVSHDRLGNAKKPERQVSR) the chain is Cytoplasmic. The helical transmembrane segment at 251–274 (MVVVMIVAYLVGWTPYAAFSIIVT) threads the bilayer. The Extracellular segment spans residues 275-282 (ACPTIYLD). Residues 283–307 (PRLAAAPAFFSKTAAVYNPVIYVFM) form a helical membrane-spanning segment. Lys-294 is modified (N6-(retinylidene)lysine). At 308-323 (NKQVSTQLNWGFWSRA) the chain is on the cytoplasmic side.

Belongs to the G-protein coupled receptor 1 family. Opsin subfamily. Phosphorylated on some or all of the serine and threonine residues present in the C-terminal region.

It is found in the membrane. The chain is Vertebrate ancient opsin from Salmo salar (Atlantic salmon).